The sequence spans 463 residues: Vicilin (463 aa).

The signal sequence occupies residues 1-27 (MAATTLKDSFPLLTLLGIAFLASVCLS). Residues 35 to 194 (PFVFESNRFQ…SFNTDYKEIE (160 aa)) form the Cupin type-1 1 domain. The segment at 235 to 257 (LNKNAKSSSKKSTSSESEPFNLR) is disordered. A compositionally biased stretch (low complexity) spans 238–252 (NAKSSSKKSTSSESE). One can recognise a Cupin type-1 2 domain in the interval 254 to 426 (FNLRSREPIY…AFPGSAQEVD (173 aa)).

Belongs to the 7S seed storage protein family.

It is found in the vacuole. The protein localises to the aleurone grain. Seed storage protein. This Vicia faba (Broad bean) protein is Vicilin.